Consider the following 355-residue polypeptide: Alpha-N-acetylneuraminide alpha-2,8-sialyltransferase (355 aa).

The Cytoplasmic portion of the chain corresponds to 1–28 (MSPCGRALHTSRGAMAMLARKFPRTRLP). A helical; Signal-anchor for type II membrane protein membrane pass occupies residues 29–47 (VGASALCVVVLCWLYIFPV). Residues 48–355 (YRLPNEKEIV…CEEPSPQPTS (308 aa)) lie on the Lumenal side of the membrane. Residues Asn70 and Asn118 are each glycosylated (N-linked (GlcNAc...) asparagine). 2 disulfide bridges follow: Cys137/Cys286 and Cys151/Cys346. 2 residues coordinate CMP-N-acetyl-beta-neuraminate: Asn142 and Asn165. Residues Asn213 and Asn244 are each glycosylated (N-linked (GlcNAc...) asparagine). Residues Ser273, Thr274, Gly275, Trp295, and His309 each contribute to the CMP-N-acetyl-beta-neuraminate site. His321 acts as the Proton donor/acceptor in catalysis.

This sequence belongs to the glycosyltransferase 29 family.

The protein localises to the golgi apparatus membrane. It carries out the reaction an N-acetyl-alpha-neuraminyl-(2-&gt;3)-beta-D-galactosyl derivative + CMP-N-acetyl-beta-neuraminate = an N-acetyl-alpha-neuraminyl-(2-&gt;8)-N-acetyl-alpha-neuraminyl-(2-&gt;3)-beta-D-galactosyl derivative + CMP + H(+). The enzyme catalyses a ganglioside GM3 (d18:1(4E)) + CMP-N-acetyl-beta-neuraminate = a ganglioside GD3 (d18:1(4E)) + CMP + H(+). It catalyses the reaction a ganglioside GD3 (d18:1(4E)) + CMP-N-acetyl-beta-neuraminate = a ganglioside GT3 (d18:1(4E)) + CMP + H(+). The catalysed reaction is a ganglioside GD1a (d18:1(4E)) + CMP-N-acetyl-beta-neuraminate = a ganglioside GT1a (d18:1(4E)) + CMP + H(+). It carries out the reaction a ganglioside GT1b (d18:1(4E)) + CMP-N-acetyl-beta-neuraminate = a ganglioside GQ1b (d18:1(4E)) + CMP + H(+). The enzyme catalyses a ganglioside GM1b (d18:1(4E)) + CMP-N-acetyl-beta-neuraminate = a ganglioside GD1c (d18:1(4E)) + CMP + H(+). It catalyses the reaction a ganglioside GD3 + CMP-N-acetyl-beta-neuraminate = a ganglioside GT3 + CMP + H(+). The catalysed reaction is [alpha-N-acetylneuraminyl-(2-&gt;8)](n)-alpha-N-acetylneuraminyl-(2-&gt;8)-alpha-N-acetylneuraminyl-(2-&gt;3)-beta-D-galactosyl-(1-&gt;4)-beta-D-glucosyl-(1&lt;-&gt;1)-ceramide + CMP-N-acetyl-beta-neuraminate = [alpha-N-acetylneuraminyl-(2-&gt;8)](n+1)-alpha-N-acetylneuraminyl-(2-&gt;8)-alpha-N-acetylneuraminyl-(2-&gt;3)-beta-D-galactosyl-(1-&gt;4)-beta-D-glucosyl-(1&lt;-&gt;1)-ceramide + CMP + H(+). It functions in the pathway protein modification; protein glycosylation. The protein operates within lipid metabolism; sphingolipid metabolism. Functionally, catalyzes the addition of sialic acid in alpha 2,8-linkage to the sialic acid moiety of the ganglioside GM3 to form ganglioside GD3; gangliosides are a subfamily of complex glycosphingolipds that contain one or more residues of sialic acid. Can catalyze the addition of a second alpha-2,8- sialic acid to GD3 to form GT3. Can use GM1b, GD1a and GT1b as acceptor substrates to synthesize GD1c, GT1a and GQ1b respectively. This is Alpha-N-acetylneuraminide alpha-2,8-sialyltransferase from Mus musculus (Mouse).